Consider the following 392-residue polypeptide: GTPase Obg (392 aa).

In terms of domain architecture, Obg spans 1–159 (MKFVDEAEIR…RNLKLELMLL (159 aa)). Positions 121-146 (GFHGLGNTRFKSSTNRAPRQKTNGTP) are disordered. Polar residues predominate over residues 129 to 145 (RFKSSTNRAPRQKTNGT). The OBG-type G domain occupies 160 to 333 (ADVGLLGMPN…LCNDVMDFIE (174 aa)). Residues 166-173 (GMPNAGKS), 191-195 (FTTLV), 213-216 (DIPG), 283-286 (NKVD), and 314-316 (SAF) each bind GTP. Mg(2+)-binding residues include Ser-173 and Thr-193.

The protein belongs to the TRAFAC class OBG-HflX-like GTPase superfamily. OBG GTPase family. In terms of assembly, monomer. Mg(2+) serves as cofactor.

It is found in the cytoplasm. An essential GTPase which binds GTP, GDP and possibly (p)ppGpp with moderate affinity, with high nucleotide exchange rates and a fairly low GTP hydrolysis rate. Plays a role in control of the cell cycle, stress response, ribosome biogenesis and in those bacteria that undergo differentiation, in morphogenesis control. This Alteromonas mediterranea (strain DSM 17117 / CIP 110805 / LMG 28347 / Deep ecotype) protein is GTPase Obg.